A 395-amino-acid polypeptide reads, in one-letter code: Elongation factor Tu (395 aa).

Residues 10–204 (KPHVNIGTIG…EVDAYIPTPE (195 aa)) enclose the tr-type G domain. The interval 19–26 (GHVDHGKT) is G1. 19–26 (GHVDHGKT) lines the GTP pocket. A Mg(2+)-binding site is contributed by T26. Positions 60–64 (GITIS) are G2. Residues 81 to 84 (DCPG) are G3. GTP-binding positions include 81–85 (DCPGH) and 136–139 (NKCD). The G4 stretch occupies residues 136 to 139 (NKCD). The interval 174 to 176 (SAL) is G5.

It belongs to the TRAFAC class translation factor GTPase superfamily. Classic translation factor GTPase family. EF-Tu/EF-1A subfamily. In terms of assembly, monomer.

It localises to the cytoplasm. It carries out the reaction GTP + H2O = GDP + phosphate + H(+). GTP hydrolase that promotes the GTP-dependent binding of aminoacyl-tRNA to the A-site of ribosomes during protein biosynthesis. In Bacillus cereus (strain G9842), this protein is Elongation factor Tu.